Here is a 167-residue protein sequence, read N- to C-terminus: MENFLRKTAWLYLSIAVSVFLLDIITKNLAEKLFTTHVEVFPFLEFYLIYNKGVAFGLLSELPDPLRLPLLLITPVIALIITFLYALYSGDRIVAISMGLIGGGALGNLYDRLFLGMVRDFIHLHIGEYYWPAFNIADASISIGIALLILKYFFTKPALKNLVNRTR.

3 consecutive transmembrane segments (helical) span residues 9 to 29, 68 to 88, and 98 to 118; these read AWLY…TKNL, LPLL…YALY, and MGLI…LGMV. Residues Asp-120 and Asp-138 contribute to the active site. A helical transmembrane segment spans residues 130–150; it reads YWPAFNIADASISIGIALLIL.

The protein belongs to the peptidase A8 family.

It localises to the cell inner membrane. It catalyses the reaction Release of signal peptides from bacterial membrane prolipoproteins. Hydrolyzes -Xaa-Yaa-Zaa-|-(S,diacylglyceryl)Cys-, in which Xaa is hydrophobic (preferably Leu), and Yaa (Ala or Ser) and Zaa (Gly or Ala) have small, neutral side chains.. Its pathway is protein modification; lipoprotein biosynthesis (signal peptide cleavage). In terms of biological role, this protein specifically catalyzes the removal of signal peptides from prolipoproteins. The polypeptide is Lipoprotein signal peptidase (Aquifex aeolicus (strain VF5)).